The chain runs to 302 residues: Putative cyclin-D6-1 (302 aa).

It belongs to the cyclin family. Cyclin D subfamily.

The protein is Putative cyclin-D6-1 (CYCD6-1) of Arabidopsis thaliana (Mouse-ear cress).